Here is a 384-residue protein sequence, read N- to C-terminus: tRNA-specific 2-thiouridylase MnmA (384 aa).

ATP-binding positions include 9 to 16 and Met-35; that span reads GMSGGVDS. The segment at 95-97 is interaction with target base in tRNA; sequence NPD. Residue Cys-100 is the Nucleophile of the active site. The cysteines at positions 100 and 196 are disulfide-linked. Gly-124 lines the ATP pocket. An interaction with tRNA region spans residues 146 to 148; that stretch reads KDQ. The active-site Cysteine persulfide intermediate is Cys-196. The interaction with tRNA stretch occupies residues 308-309; the sequence is RY.

The protein belongs to the MnmA/TRMU family.

The protein localises to the cytoplasm. It catalyses the reaction S-sulfanyl-L-cysteinyl-[protein] + uridine(34) in tRNA + AH2 + ATP = 2-thiouridine(34) in tRNA + L-cysteinyl-[protein] + A + AMP + diphosphate + H(+). Catalyzes the 2-thiolation of uridine at the wobble position (U34) of tRNA, leading to the formation of s(2)U34. The chain is tRNA-specific 2-thiouridylase MnmA from Burkholderia vietnamiensis (strain G4 / LMG 22486) (Burkholderia cepacia (strain R1808)).